The primary structure comprises 436 residues: MNNNTSIIILAAGLGTRMKSKRPKVLFELCGEPMIIHILKQAYAITNDVSVVLHYEKELISKKIKEIFPQTKIFEQDLANFPGTAGAIKGVNLSGEKVLVTCGDMPLVRSTDLMRLANAEADVVMSSFEAANPFGYGRVIIKNGKVEAIVEQKDASEAQLAIKSVNAGCYCFKREALEQILPLINNQNAQKEYYLTDAIKIANEKGLKCVAVNVNEQNFMGINDKFQLSIAEKIMQDEIKQNLMKAGVLMRMPESIFIDSRAKFEGECVLEENVSILGECVITESIIKSSSVIESSVIKNSDIGPLAHIRPNSEISDTHIGNFVEVKKGVLNGVKAGHLSYLGDCEIESGTNIGCGTITCNYDGKAKYKTKIGKNVFVGSDTQLVAPVNIADNVIIAAGSTITKDVESGALAISRGRQENKSGFFEKFFGKDDVKK.

Positions 1-225 (MNNNTSIIIL…EQNFMGINDK (225 aa)) are pyrophosphorylase. UDP-N-acetyl-alpha-D-glucosamine is bound by residues 10–13 (LAAG), Lys-24, Gln-76, and 83–84 (GT). Asp-104 lines the Mg(2+) pocket. 4 residues coordinate UDP-N-acetyl-alpha-D-glucosamine: Gly-137, Glu-151, Asn-166, and Asn-223. Residue Asn-223 participates in Mg(2+) binding. The tract at residues 226–246 (FQLSIAEKIMQDEIKQNLMKA) is linker. The N-acetyltransferase stretch occupies residues 247–436 (GVLMRMPESI…KFFGKDDVKK (190 aa)). UDP-N-acetyl-alpha-D-glucosamine contacts are provided by Arg-310 and Lys-327. The active-site Proton acceptor is the His-338. The UDP-N-acetyl-alpha-D-glucosamine site is built by Tyr-341 and Asn-352. Acetyl-CoA-binding positions include 361–362 (NY), Ser-380, Ala-398, and Arg-415.

The protein in the N-terminal section; belongs to the N-acetylglucosamine-1-phosphate uridyltransferase family. This sequence in the C-terminal section; belongs to the transferase hexapeptide repeat family. Homotrimer. Requires Mg(2+) as cofactor.

It localises to the cytoplasm. It catalyses the reaction alpha-D-glucosamine 1-phosphate + acetyl-CoA = N-acetyl-alpha-D-glucosamine 1-phosphate + CoA + H(+). The catalysed reaction is N-acetyl-alpha-D-glucosamine 1-phosphate + UTP + H(+) = UDP-N-acetyl-alpha-D-glucosamine + diphosphate. The protein operates within nucleotide-sugar biosynthesis; UDP-N-acetyl-alpha-D-glucosamine biosynthesis; N-acetyl-alpha-D-glucosamine 1-phosphate from alpha-D-glucosamine 6-phosphate (route II): step 2/2. Its pathway is nucleotide-sugar biosynthesis; UDP-N-acetyl-alpha-D-glucosamine biosynthesis; UDP-N-acetyl-alpha-D-glucosamine from N-acetyl-alpha-D-glucosamine 1-phosphate: step 1/1. It participates in bacterial outer membrane biogenesis; LPS lipid A biosynthesis. Its function is as follows. Catalyzes the last two sequential reactions in the de novo biosynthetic pathway for UDP-N-acetylglucosamine (UDP-GlcNAc). The C-terminal domain catalyzes the transfer of acetyl group from acetyl coenzyme A to glucosamine-1-phosphate (GlcN-1-P) to produce N-acetylglucosamine-1-phosphate (GlcNAc-1-P), which is converted into UDP-GlcNAc by the transfer of uridine 5-monophosphate (from uridine 5-triphosphate), a reaction catalyzed by the N-terminal domain. The sequence is that of Bifunctional protein GlmU from Campylobacter concisus (strain 13826).